A 520-amino-acid polypeptide reads, in one-letter code: Leucine carboxyl methyltransferase 1 (520 aa).

2 disordered regions span residues 1–116 (MQRD…DDAV) and 142–174 (TQEF…SIRR). Residues 79 to 89 (PSLRLSLGLPR) show a composition bias toward low complexity. Polar residues-rich tracts occupy residues 95–110 (HSGQ…STAR) and 142–151 (TQEFSSTLPS). Residues R185, G210, D237, 305–306 (DV), and E343 each bind S-adenosyl-L-methionine.

This sequence belongs to the methyltransferase superfamily. LCMT family.

The catalysed reaction is [phosphatase 2A protein]-C-terminal L-leucine + S-adenosyl-L-methionine = [phosphatase 2A protein]-C-terminal L-leucine methyl ester + S-adenosyl-L-homocysteine. Methylates the carboxyl group of the C-terminal leucine residue of protein phosphatase 2A catalytic subunits to form alpha-leucine ester residues. In Mycosarcoma maydis (Corn smut fungus), this protein is Leucine carboxyl methyltransferase 1 (PPM1).